A 72-amino-acid polypeptide reads, in one-letter code: Conotoxin LvVIA (72 aa).

A signal peptide spans 1–17 (VLIIAVLFLTASELVTA). A propeptide spanning residues 18-41 (DYTRDKWQYRAASLRDAMRNFRDT) is cleaved from the precursor. 3 disulfides stabilise this stretch: C44–C58, C51–C63, and C57–C70.

Belongs to the conotoxin O1 superfamily. As to expression, expressed by the venom duct.

Its subcellular location is the secreted. This is Conotoxin LvVIA from Conus lividus (Livid cone).